The sequence spans 121 residues: Basic phospholipase A2 BbTX-III (121 aa).

Tyr-27, Gly-29, and Gly-31 together coordinate Ca(2+). Disulfide bonds link Cys-28/Cys-44, Cys-43/Cys-95, Cys-49/Cys-121, Cys-50/Cys-88, Cys-58/Cys-82, and Cys-76/Cys-86. His-47 is a catalytic residue. Residue Asp-48 participates in Ca(2+) binding. Asp-89 is a catalytic residue.

It belongs to the phospholipase A2 family. Group II subfamily. D49 sub-subfamily. In terms of assembly, homodimer; non-covalently linked. The cofactor is Ca(2+). In terms of tissue distribution, expressed by the venom gland.

The protein localises to the secreted. It carries out the reaction a 1,2-diacyl-sn-glycero-3-phosphocholine + H2O = a 1-acyl-sn-glycero-3-phosphocholine + a fatty acid + H(+). Functionally, snake venom phospholipase A2 (PLA2) that exhibits myotoxin and anticoagulant activity. Displays edema-inducing activities in mouse paw. Also displays cytotoxic activity against some cell lines and myotubes, and antimicrobial activities against E.coli, C.albicans and Leishmania. PLA2 catalyzes the calcium-dependent hydrolysis of the 2-acyl groups in 3-sn-phosphoglycerides. This chain is Basic phospholipase A2 BbTX-III, found in Bothrops brazili (Brazil's lancehead).